The chain runs to 866 residues: DNA mismatch repair protein MutS (866 aa).

Residue 618 to 625 (GPNMSGKS) coordinates ATP.

This sequence belongs to the DNA mismatch repair MutS family.

Functionally, this protein is involved in the repair of mismatches in DNA. It is possible that it carries out the mismatch recognition step. This protein has a weak ATPase activity. This chain is DNA mismatch repair protein MutS, found in Flavobacterium psychrophilum (strain ATCC 49511 / DSM 21280 / CIP 103535 / JIP02/86).